The following is a 393-amino-acid chain: Formate-dependent phosphoribosylglycinamide formyltransferase (393 aa).

N(1)-(5-phospho-beta-D-ribosyl)glycinamide contacts are provided by residues 22 to 23 and Glu-82; that span reads EL. ATP is bound by residues Arg-114, Lys-155, 160-165, 195-198, and Glu-203; these read SSGKGQ and EGFV. Residues 119-308 form the ATP-grasp domain; it reads RLAAEELGLV…EFALHVRAIL (190 aa). Positions 267 and 279 each coordinate Mg(2+). N(1)-(5-phospho-beta-D-ribosyl)glycinamide is bound by residues Asp-286, Lys-356, and 363–364; that span reads RR.

Belongs to the PurK/PurT family. Homodimer.

The enzyme catalyses N(1)-(5-phospho-beta-D-ribosyl)glycinamide + formate + ATP = N(2)-formyl-N(1)-(5-phospho-beta-D-ribosyl)glycinamide + ADP + phosphate + H(+). It functions in the pathway purine metabolism; IMP biosynthesis via de novo pathway; N(2)-formyl-N(1)-(5-phospho-D-ribosyl)glycinamide from N(1)-(5-phospho-D-ribosyl)glycinamide (formate route): step 1/1. Functionally, involved in the de novo purine biosynthesis. Catalyzes the transfer of formate to 5-phospho-ribosyl-glycinamide (GAR), producing 5-phospho-ribosyl-N-formylglycinamide (FGAR). Formate is provided by PurU via hydrolysis of 10-formyl-tetrahydrofolate. The chain is Formate-dependent phosphoribosylglycinamide formyltransferase from Solidesulfovibrio magneticus (strain ATCC 700980 / DSM 13731 / RS-1) (Desulfovibrio magneticus).